The primary structure comprises 197 residues: MTSLYLASGSPRRQELLAQLGVTFERIVTGIEEQRQPQESAQQYVVRLAREKAQAGVAQTAQDLPVLGADIIVILNGEVLEKPRDAEHAAQMLRKLSGQTHQVMTAVALADSQHILDCLVVTDVTFRTLTDEDIAGYVASGEPLDKAGAYGIQGLGGCFVRKINGSYHAVVGLPLVETYELLSNFNALREKRDKHDG.

Asp-70 acts as the Proton acceptor in catalysis.

The protein belongs to the Maf family. A divalent metal cation serves as cofactor.

The protein resides in the cytoplasm. The enzyme catalyses a ribonucleoside 5'-triphosphate + H2O = a ribonucleoside 5'-phosphate + diphosphate + H(+). The catalysed reaction is a 2'-deoxyribonucleoside 5'-triphosphate + H2O = a 2'-deoxyribonucleoside 5'-phosphate + diphosphate + H(+). Functionally, nucleoside triphosphate pyrophosphatase. May have a dual role in cell division arrest and in preventing the incorporation of modified nucleotides into cellular nucleic acids. This is Nucleoside triphosphate pyrophosphatase (yhdE) from Shigella flexneri.